We begin with the raw amino-acid sequence, 612 residues long: UPF0329 protein ECU05_1680/ECU11_0050 (612 aa).

Basic and acidic residues predominate over residues 304 to 330 (RQRREMEKKEEEKKKEEEKKKEEEKRK). Residues 304–424 (RQRREMEKKE…RKRYKIHRRV (121 aa)) are disordered. Residues 331–349 (EEKKKKKEEKKEEKKKKKE) show a composition bias toward basic residues. A compositionally biased stretch (basic and acidic residues) spans 350–388 (EKKEEKKEEKKEEKKEEKKEEKKEEKKEEKSGKSLREGE).

It belongs to the UPF0329 family.

This is UPF0329 protein ECU05_1680/ECU11_0050 from Encephalitozoon cuniculi (strain GB-M1) (Microsporidian parasite).